Here is a 143-residue protein sequence, read N- to C-terminus: Putative pre-16S rRNA nuclease (143 aa).

Belongs to the YqgF nuclease family.

The protein localises to the cytoplasm. In terms of biological role, could be a nuclease involved in processing of the 5'-end of pre-16S rRNA. This chain is Putative pre-16S rRNA nuclease, found in Agathobacter rectalis (strain ATCC 33656 / DSM 3377 / JCM 17463 / KCTC 5835 / VPI 0990) (Eubacterium rectale).